The sequence spans 408 residues: Epsin-3 (408 aa).

S2 bears the N-acetylserine mark. One can recognise an ENTH domain in the interval 24–157 (NVVFNYTEME…SDDNKIRAER (134 aa)). The interval 162-182 (ETAKKYKGVAGGSASADGSLN) is disordered. Phosphoserine occurs at positions 196, 198, 203, 212, and 223. Disordered regions lie at residues 199 to 322 (ADFD…ITPA) and 338 to 408 (TAKA…LLSF). Residues 201-210 (FDSDNEDNED) are compositionally biased toward acidic residues. Positions 211 to 231 (GSFSQNGYNDNASRATSTPGQ) are enriched in polar residues. A compositionally biased stretch (basic and acidic residues) spans 249–263 (KPSKELIQEDEKKAD). Residues 264–273 (EEEDDDDEFS) show a composition bias toward acidic residues. A compositionally biased stretch (polar residues) spans 279-317 (VPVTNPANSFNLLNTSPIEGMPATTSSMPFYNSSTTDQG). The segment covering 338-361 (TAKASAEAPSAPKASQAKAAASNP) has biased composition (low complexity). 2 stretches are compositionally biased toward polar residues: residues 362-371 (VSNSTTALST) and 388-398 (QQEQNTNNNHT). Basic and acidic residues predominate over residues 399 to 408 (SSKEIDLLSF).

In terms of assembly, interacts with the clathrin adapter GGA2, and VPS27.

Its subcellular location is the cytoplasm. The protein localises to the golgi apparatus. It localises to the trans-Golgi network membrane. It is found in the cytoplasmic vesicle. The protein resides in the clathrin-coated vesicle membrane. Involved in the recruitment of clathrin to the Golgi network and endosomes to form clathrin coated vesicles. Plays a role in the trafficking of clathrin between the Golgi network and endosomes. Binds to membranes enriched in phosphatidylinositol-3,5-bisphosphate (PtdIns(3,5)P2) and, in association with VPS27, is involved in protein sorting at the multivesicular body (MVB). This chain is Epsin-3 (ENT3), found in Saccharomyces cerevisiae (strain ATCC 204508 / S288c) (Baker's yeast).